The primary structure comprises 779 residues: Probable glutamine--tRNA ligase (779 aa).

ATP-binding positions include 268-270 and 274-280; these read EPN and HIGHAKA. L-glutamine is bound by residues Asp-300 and Tyr-440. ATP is bound by residues Thr-459, 488 to 489, and 496 to 498; these read RL and LSK.

It belongs to the class-I aminoacyl-tRNA synthetase family.

The enzyme catalyses tRNA(Gln) + L-glutamine + ATP = L-glutaminyl-tRNA(Gln) + AMP + diphosphate. This Dictyostelium discoideum (Social amoeba) protein is Probable glutamine--tRNA ligase (glnS).